The primary structure comprises 135 residues: Adult cuticle protein 1 (135 aa).

The N-terminal stretch at 1-19 is a signal peptide; that stretch reads MKFAVAVIFTLALAMGVQS. 3 consecutive repeat copies span residues 72–75, 78–81, and 128–131.

In terms of tissue distribution, detected in the epidermis underlying the head and thorax (including legs and wings), but not in the abdominal epidermis of newly eclosed flies.

In terms of biological role, component of the cuticle of the adult fruit fly. Could be involved in thickening of the hard adult cuticle. The sequence is that of Adult cuticle protein 1 (Acp1) from Drosophila melanogaster (Fruit fly).